A 411-amino-acid polypeptide reads, in one-letter code: Glutamate dehydrogenase 2, mitochondrial (411 aa).

Residues 1 to 18 constitute a mitochondrion transit peptide; the sequence is MNALAATSRNFRQAARLL. Lysine 102 is a catalytic residue.

This sequence belongs to the Glu/Leu/Phe/Val dehydrogenases family. Expressed in roots. Expressed ubiquitously in various tissues.

Its subcellular location is the mitochondrion. The enzyme catalyses L-glutamate + NAD(+) + H2O = 2-oxoglutarate + NH4(+) + NADH + H(+). It catalyses the reaction L-glutamate + NADP(+) + H2O = 2-oxoglutarate + NH4(+) + NADPH + H(+). The sequence is that of Glutamate dehydrogenase 2, mitochondrial (GDH2) from Oryza sativa subsp. japonica (Rice).